The primary structure comprises 167 residues: Ribosome-binding factor A (167 aa).

A disordered region spans residues 122-167 (LAASAKHAGEADPYKGDSPEDIDEDDFDEEDTDLSGDNDLDEDANR). Over residues 128–139 (HAGEADPYKGDS) the composition is skewed to basic and acidic residues. Over residues 140-167 (PEDIDEDDFDEEDTDLSGDNDLDEDANR) the composition is skewed to acidic residues.

Belongs to the RbfA family. As to quaternary structure, monomer. Binds 30S ribosomal subunits, but not 50S ribosomal subunits or 70S ribosomes.

It is found in the cytoplasm. In terms of biological role, one of several proteins that assist in the late maturation steps of the functional core of the 30S ribosomal subunit. Associates with free 30S ribosomal subunits (but not with 30S subunits that are part of 70S ribosomes or polysomes). Required for efficient processing of 16S rRNA. May interact with the 5'-terminal helix region of 16S rRNA. The sequence is that of Ribosome-binding factor A from Paenarthrobacter aurescens (strain TC1).